The sequence spans 355 residues: Aminopeptidase N (355 aa).

Substrate contacts are provided by residues Glu156 and 290-294 (GAMEN). A Zn(2+)-binding site is contributed by His326. The active-site Proton acceptor is the Glu327. Positions 330 and 349 each coordinate Zn(2+). Glu349 contacts substrate.

The protein belongs to the peptidase M1 family. Zn(2+) serves as cofactor.

The protein localises to the cytoplasm. It catalyses the reaction Release of an N-terminal amino acid, Xaa-|-Yaa- from a peptide, amide or arylamide. Xaa is preferably Ala, but may be most amino acids including Pro (slow action). When a terminal hydrophobic residue is followed by a prolyl residue, the two may be released as an intact Xaa-Pro dipeptide.. Its function is as follows. Aminopeptidase N is involved in the degradation of intracellular peptides generated by protein breakdown during normal growth as well as in response to nutrient starvation. The protein is Aminopeptidase N (pepN) of Acetobacter pasteurianus (Acetobacter turbidans).